The chain runs to 357 residues: Probable cinnamyl alcohol dehydrogenase 1 (357 aa).

A Zn(2+)-binding site is contributed by cysteine 47. Threonine 49 contacts NADP(+). Histidine 69, glutamate 70, cysteine 100, cysteine 103, cysteine 106, cysteine 114, and cysteine 163 together coordinate Zn(2+). Residues threonine 167, 188 to 193 (GLGGVG), 211 to 216 (SSSNKK), threonine 251, glycine 275, and 298 to 300 (SFI) each bind NADP(+).

This sequence belongs to the zinc-containing alcohol dehydrogenase family. In terms of assembly, homodimer. Zn(2+) serves as cofactor. The N-terminus is blocked.

The catalysed reaction is (E)-cinnamyl alcohol + NADP(+) = (E)-cinnamaldehyde + NADPH + H(+). It catalyses the reaction (E)-coniferol + NADP(+) = (E)-coniferaldehyde + NADPH + H(+). It carries out the reaction (E)-sinapyl alcohol + NADP(+) = (E)-sinapaldehyde + NADPH + H(+). The enzyme catalyses (E)-4-coumaroyl alcohol + NADP(+) = (E)-4-coumaraldehyde + NADPH + H(+). The catalysed reaction is (E)-caffeyl alcohol + NADP(+) = (E)-caffeyl aldehyde + NADPH + H(+). It functions in the pathway aromatic compound metabolism; phenylpropanoid biosynthesis. Functionally, involved in lignin biosynthesis. Catalyzes the final step specific for the production of lignin monomers. Catalyzes the NADPH-dependent reduction of coniferaldehyde, 5-hydroxyconiferaldehyde, sinapaldehyde, 4-coumaraldehyde and caffeyl aldehyde to their respective alcohols. The chain is Probable cinnamyl alcohol dehydrogenase 1 from Nicotiana tabacum (Common tobacco).